Reading from the N-terminus, the 232-residue chain is MRRAVVVFSGGQDSTTCLIQAINQYDEVHCVTFDYGQRHRAEIDVARNVSHFLGVVAHKVLDVTLLNELALSSLTRDNIPVPDHSESEKSAIPSTFVPGRNILFLTLAAIYAYQVEAEAVITGVCETDFSGYPDCRDEFVKALNKAVSLGIARDIRFETPLMWLNKAETWALSDYYQHLDFVRSQTLTCYNGIQGNGCGTCAACHLRANGLEQYLNAPEKIMTEMKAKTHLV.

8–18 is a binding site for ATP; sequence FSGGQDSTTCL. The Zn(2+) site is built by Cys-189, Cys-198, Cys-201, and Cys-204.

It belongs to the QueC family. It depends on Zn(2+) as a cofactor.

It catalyses the reaction 7-carboxy-7-deazaguanine + NH4(+) + ATP = 7-cyano-7-deazaguanine + ADP + phosphate + H2O + H(+). It functions in the pathway purine metabolism; 7-cyano-7-deazaguanine biosynthesis. Its function is as follows. Catalyzes the ATP-dependent conversion of 7-carboxy-7-deazaguanine (CDG) to 7-cyano-7-deazaguanine (preQ(0)). In Photorhabdus laumondii subsp. laumondii (strain DSM 15139 / CIP 105565 / TT01) (Photorhabdus luminescens subsp. laumondii), this protein is 7-cyano-7-deazaguanine synthase.